Reading from the N-terminus, the 368-residue chain is ATP-dependent (S)-NAD(P)H-hydrate dehydratase (368 aa).

Positions 3 to 359 constitute a YjeF C-terminal domain; sequence SPSKKLLANV…DEVHGSFLDL (357 aa). (6S)-NADPHX contacts are provided by residues Gly-120 and 173 to 179; that span reads NVVEFAR. Residues 217–221 and 236–245 each bind ATP; these read KGPHD and GGLKRSGGQG. Asp-246 serves as a coordination point for (6S)-NADPHX.

Belongs to the NnrD/CARKD family. It depends on Mg(2+) as a cofactor.

The protein localises to the cytoplasm. It catalyses the reaction (6S)-NADHX + ATP = ADP + phosphate + NADH + H(+). The enzyme catalyses (6S)-NADPHX + ATP = ADP + phosphate + NADPH + H(+). Functionally, catalyzes the dehydration of the S-form of NAD(P)HX at the expense of ATP, which is converted to ADP. Together with NAD(P)HX epimerase, which catalyzes the epimerization of the S- and R-forms, the enzyme allows the repair of both epimers of NAD(P)HX, a damaged form of NAD(P)H that is a result of enzymatic or heat-dependent hydration. The chain is ATP-dependent (S)-NAD(P)H-hydrate dehydratase from Ajellomyces capsulatus (strain G186AR / H82 / ATCC MYA-2454 / RMSCC 2432) (Darling's disease fungus).